We begin with the raw amino-acid sequence, 302 residues long: tRNA dimethylallyltransferase (302 aa).

2-9 serves as a coordination point for ATP; it reads GPTACGKS. Substrate is bound at residue 4–9; the sequence is TACGKS. Interaction with substrate tRNA regions lie at residues 27 to 30 and 149 to 153; these read DSAL and QRLIR.

It belongs to the IPP transferase family. As to quaternary structure, monomer. The cofactor is Mg(2+).

The catalysed reaction is adenosine(37) in tRNA + dimethylallyl diphosphate = N(6)-dimethylallyladenosine(37) in tRNA + diphosphate. Its function is as follows. Catalyzes the transfer of a dimethylallyl group onto the adenine at position 37 in tRNAs that read codons beginning with uridine, leading to the formation of N6-(dimethylallyl)adenosine (i(6)A). This chain is tRNA dimethylallyltransferase, found in Buchnera aphidicola subsp. Acyrthosiphon pisum (strain 5A).